The primary structure comprises 1153 residues: Integrin alpha-M (1153 aa).

An N-terminal signal peptide occupies residues 1-16; the sequence is MTLKALLVTALALCHG. At 17-1105 the chain is on the extracellular side; sequence FNLDTEHPMT…TKVEPYEVHN (1089 aa). FG-GAP repeat units lie at residues 18–75 and 76–135; these read NLDT…RCHP and IPLQ…RPPQ. A glycan (N-linked (GlcNAc...) asparagine) is linked at Asn-58. Cys-66 and Cys-73 form a disulfide bridge. Asn-86 is a glycosylation site (N-linked (GlcNAc...) asparagine). Residues Cys-105 and Cys-123 are joined by a disulfide bond. A VWFA domain is found at 164 to 338; it reads IDFQKMKEFV…QEKIFAIEGT (175 aa). 5 FG-GAP repeats span residues 339-390, 391-442, 443-503, 506-564, and 569-629; these read QTGS…VTFI, NTTR…FGTW, EPHT…RARW, EALL…ASLS, and HRII…FSPK. Asn-391 is a glycosylation site (N-linked (GlcNAc...) asparagine). Ca(2+)-binding residues include Asp-465, Asp-467, Asp-469, Asn-471, Asn-473, Asp-529, Asn-531, Asp-533, Asp-537, Asp-592, Asp-596, and Asp-600. A disulfide bridge links Cys-654 with Cys-711. N-linked (GlcNAc...) asparagine glycosylation is found at Asn-696, Asn-734, Asn-772, Asn-801, Asn-881, Asn-907, Asn-941, Asn-980, Asn-994, and Asn-1022. Cys-770 and Cys-776 are joined by a disulfide. 2 cysteine pairs are disulfide-bonded: Cys-999-Cys-1023 and Cys-1028-Cys-1033. 3 N-linked (GlcNAc...) asparagine glycosylation sites follow: Asn-1045, Asn-1051, and Asn-1076. The chain crosses the membrane as a helical span at residues 1106–1129; the sequence is PVPLIVGSSIGGLVLLALITAGLY. Residues 1130–1153 lie on the Cytoplasmic side of the membrane; sequence KLGFFKRQYKDMMNEAAPQDAPPQ. A GFFKR motif motif is present at residues 1132–1136; it reads GFFKR.

This sequence belongs to the integrin alpha chain family. As to quaternary structure, heterodimer of an alpha and a beta subunit. ITGAM associates with ITGB2. Found in a complex with CD177 and ITGB2/CD18. Interacts with JAM3. Interacts with THBD. Interacts with complement factor H/CFH; this interaction mediates adhesion of neutrophils to pathogens leading to pathogen clearance. Interacts with TMEM268; this interaction inhibits ITGAM degradation via the endosome-lysosome pathway. Predominantly expressed in monocytes and granulocytes. Expressed in a subset of peritoneal mast cells. Expressed in microglia (at protein level).

It localises to the cell membrane. It is found in the membrane raft. Functionally, integrin ITGAM/ITGB2 is implicated in various adhesive interactions of monocytes, macrophages and granulocytes as well as in mediating the uptake of complement-coated particles and pathogens. It is identical with CR-3, the receptor for the iC3b fragment of the third complement component. It probably recognizes the R-G-D peptide in C3b. Integrin ITGAM/ITGB2 is also a receptor for fibrinogen, factor X and ICAM1. It recognizes P1 and P2 peptides of fibrinogen gamma chain. Regulates neutrophil migration. In association with beta subunit ITGB2/CD18, required for CD177-PRTN3-mediated activation of TNF primed neutrophils. May regulate phagocytosis-induced apoptosis in extravasated neutrophils. May play a role in mast cell development. Required with TYROBP/DAP12 in microglia to control production of microglial superoxide ions which promote the neuronal apoptosis that occurs during brain development. The sequence is that of Integrin alpha-M (Itgam) from Mus musculus (Mouse).